The chain runs to 58 residues: UPF0391 membrane protein Sbal195_1447 (58 aa).

2 helical membrane-spanning segments follow: residues 6–26 (LVFL…IAGA) and 28–48 (AGIA…SLLV).

Belongs to the UPF0391 family.

The protein localises to the cell membrane. The chain is UPF0391 membrane protein Sbal195_1447 from Shewanella baltica (strain OS195).